We begin with the raw amino-acid sequence, 264 residues long: Granzyme K (264 aa).

The first 24 residues, 1-24 (MTKFSSFSLFFLIVGAYMTHVCFN), serve as a signal peptide directing secretion. The propeptide at 25–26 (ME) is activation peptide. In terms of domain architecture, Peptidase S1 spans 27–259 (IIGGKEVSPH…YQTWIKSNLV (233 aa)). The cysteines at positions 52 and 68 are disulfide-linked. Catalysis depends on charge relay system residues H67 and D116. 3 cysteine pairs are disulfide-bonded: C149–C220, C181–C199, and C210–C234. S214 acts as the Charge relay system in catalysis.

Belongs to the peptidase S1 family. Granzyme subfamily. As to expression, expressed in lung, spleen, thymus and peripheral blood leukocytes.

It is found in the secreted. Its subcellular location is the cytoplasmic granule. This Homo sapiens (Human) protein is Granzyme K (GZMK).